The primary structure comprises 372 residues: Stress-activated protein kinase JNK (372 aa).

In terms of domain architecture, Protein kinase spans tyrosine 24 to isoleucine 320. ATP-binding positions include glycine 31 to glycine 36 and lysine 53. Catalysis depends on aspartate 149, which acts as the Proton acceptor. Threonine 181 carries the post-translational modification Phosphothreonine. The TXY motif lies at threonine 181 to tyrosine 183. Tyrosine 183 is subject to Phosphotyrosine.

It belongs to the protein kinase superfamily. CMGC Ser/Thr protein kinase family. MAP kinase subfamily. In terms of assembly, interacts with MKP-4 (via tyrosine-protein phosphatase domain); the interaction dephosphorylates bsk. Requires Mg(2+) as cofactor. Post-translationally, dually phosphorylated on Thr-181 and Tyr-183, which activates the enzyme. As to expression, during gastrulation, expression is seen in cells undergoing morphogenetic movements. By stage 9 of embryonic development, expression is ubiquitous. At stages 12-14, expression occurs in epidermis and central nervous system. At stage 15, expression is restricted to ventral nerve cord, brain and some peripheral neurons. In larvae, expression is seen in all imaginal disks, with highest levels in wing and eye disks, and in the CNS. Adults express the protein in fat body and hemocytes.

The protein resides in the nucleus. It localises to the cytoplasm. It carries out the reaction L-seryl-[protein] + ATP = O-phospho-L-seryl-[protein] + ADP + H(+). The enzyme catalyses L-threonyl-[protein] + ATP = O-phospho-L-threonyl-[protein] + ADP + H(+). Activated by threonine and tyrosine phosphorylation by the dual specificity kinase, hep. Inhibited by dual specificity phosphatase, puckered. Mitogen-activated protein kinase and key component of the c-Jun N-terminal kinase (JNK) pathway which phosphorylate and activate transcription factors involved in a wide range of biological processes including response to various stresses, cellular proliferation, differentiation and migration, and regulation of cell shape. Responds to activation by environmental stress by phosphorylating a number of transcription factors, primarily components of AP-1 such as Jra and also the transcriptional repressor aop, and thus regulates transcriptional activity. Component of the immune response activated by bacterial infection, and is involved in wound healing and in dorsal closure, a morphogenetic movement during embryogenesis. Functions in the systematic response to wounding acting downstream of the Hayan-phenoloxidase PPO1 cascade. During epidermal wound healing involved in cellular polarization by inducing the translocation of sktl and mys/integrin beta to the trailing edge. Exhibits cytoprotective activity in neuronal cells in response to wounding to the integument. Controls the expression of a phosphatase, puckered, at the edges of wounded epidermal tissue and in the dorsal epithelium during dorsal closure. Regulates the activity of SREBP in neurons and thereby the accumulation of lipids in glia. Plays a role in positively regulating the expression of DIP2 independently of AP-1, thereby ensuring proper axon guidance in mushroom bodies. In enterocytes and differentiating progenitors of the gut that are experiencing inorganic phosphate (Pi) deficiency, activated by Cka to induce nearby progenitor cells to proliferate and form new absorptive cells, probably helping the organism to cope with the nutrient deficiency by maximizing absorption of dietary Pi. This is Stress-activated protein kinase JNK from Drosophila melanogaster (Fruit fly).